The chain runs to 478 residues: Geranial dehydrogenase (478 aa).

230-235 (GSTSAG) serves as a coordination point for NAD(+). Glu-252 acts as the Proton acceptor in catalysis. Cys-286 (nucleophile) is an active-site residue.

It belongs to the aldehyde dehydrogenase family.

It catalyses the reaction (2E)-geranial + NAD(+) + H2O = geranate + NADH + 2 H(+). It carries out the reaction perillyl aldehyde + NAD(+) + H2O = perillate + NADH + 2 H(+). It participates in terpene metabolism; monoterpene degradation. Its function is as follows. Involved in the degradation of the monoterpenes beta-myrcene and limonene. During anaerobic degradation of beta-myrcene, catalyzes the NAD(+)-dependent oxidation of geranial to geranic acid. Seems to be specific for the trans-isomer geranial, since it does not act on the cis-isomer neral. During degradation of limonene, catalyzes the NAD(+)-dependent conversion of perillyl aldehyde to perrilic acid. In Castellaniella defragrans (strain DSM 12143 / CCUG 39792 / 65Phen) (Alcaligenes defragrans), this protein is Geranial dehydrogenase.